A 396-amino-acid chain; its full sequence is Succinyl-diaminopimelate desuccinylase (396 aa).

His-74 provides a ligand contact to Zn(2+). The active site involves Asp-76. Residue Asp-107 coordinates Zn(2+). Catalysis depends on Glu-142, which acts as the Proton acceptor. Zn(2+) contacts are provided by Glu-143, Glu-171, and His-360.

It belongs to the peptidase M20A family. DapE subfamily. As to quaternary structure, homodimer. Requires Zn(2+) as cofactor. It depends on Co(2+) as a cofactor.

The enzyme catalyses N-succinyl-(2S,6S)-2,6-diaminopimelate + H2O = (2S,6S)-2,6-diaminopimelate + succinate. It functions in the pathway amino-acid biosynthesis; L-lysine biosynthesis via DAP pathway; LL-2,6-diaminopimelate from (S)-tetrahydrodipicolinate (succinylase route): step 3/3. Catalyzes the hydrolysis of N-succinyl-L,L-diaminopimelic acid (SDAP), forming succinate and LL-2,6-diaminopimelate (DAP), an intermediate involved in the bacterial biosynthesis of lysine and meso-diaminopimelic acid, an essential component of bacterial cell walls. The polypeptide is Succinyl-diaminopimelate desuccinylase (Methylobacterium sp. (strain 4-46)).